A 174-amino-acid chain; its full sequence is Small ribosomal subunit protein uS5 (174 aa).

Residues 19 to 82 (LREKMVAINR…DEARRKMVKV (64 aa)) form the S5 DRBM domain.

It belongs to the universal ribosomal protein uS5 family. In terms of assembly, part of the 30S ribosomal subunit. Contacts proteins S4 and S8.

In terms of biological role, with S4 and S12 plays an important role in translational accuracy. Functionally, located at the back of the 30S subunit body where it stabilizes the conformation of the head with respect to the body. The sequence is that of Small ribosomal subunit protein uS5 from Azoarcus sp. (strain BH72).